Reading from the N-terminus, the 361-residue chain is Small ribosomal subunit protein mS46 (361 aa).

A mitochondrion-targeting transit peptide spans 1-14 (MRSSMFRCVSRAHY). The interval 37-99 (ASSNALKLDK…SDSVRANKQQ (63 aa)) is disordered. A compositionally biased stretch (basic and acidic residues) spans 43-52 (KLDKMKEGRM). Residues 59 to 68 (GNQNRNSMNN) show a composition bias toward low complexity. Residues 69 to 91 (KESRGREGNQGERNMRLKNRSSD) show a composition bias toward basic and acidic residues.

It belongs to the mitochondrion-specific ribosomal protein mS46 family. As to quaternary structure, component of the mitochondrial small ribosomal subunit (mt-SSU). Mature yeast 74S mitochondrial ribosomes consist of a small (37S) and a large (54S) subunit. The 37S small subunit contains a 15S ribosomal RNA (15S mt-rRNA) and 34 different proteins. The 54S large subunit contains a 21S rRNA (21S mt-rRNA) and 46 different proteins.

The protein localises to the mitochondrion. Functionally, component of the mitochondrial ribosome (mitoribosome), a dedicated translation machinery responsible for the synthesis of mitochondrial genome-encoded proteins, including at least some of the essential transmembrane subunits of the mitochondrial respiratory chain. The mitoribosomes are attached to the mitochondrial inner membrane and translation products are cotranslationally integrated into the membrane. This Saccharomyces cerevisiae (strain ATCC 204508 / S288c) (Baker's yeast) protein is Small ribosomal subunit protein mS46 (RSM28).